Reading from the N-terminus, the 122-residue chain is Large ribosomal subunit protein uL14 (122 aa).

The protein belongs to the universal ribosomal protein uL14 family. In terms of assembly, part of the 50S ribosomal subunit. Forms a cluster with proteins L3 and L19. In the 70S ribosome, L14 and L19 interact and together make contacts with the 16S rRNA in bridges B5 and B8.

Functionally, binds to 23S rRNA. Forms part of two intersubunit bridges in the 70S ribosome. In Acaryochloris marina (strain MBIC 11017), this protein is Large ribosomal subunit protein uL14.